The primary structure comprises 257 residues: Zinc transporter ZupT (257 aa).

5 helical membrane passes run 5-25 (LILT…AVLG), 32-52 (VLAF…LMEM), 61-81 (GMSP…YFGL), 109-129 (AILL…ATFV), and 137-157 (LGMG…LAVA). Fe(2+) is bound by residues Asn-120 and Glu-123. Residues Glu-123 and His-148 each coordinate Zn(2+). Fe(2+)-binding residues include Asn-149, Glu-152, and Glu-181. Glu-152 contacts Zn(2+). A run of 3 helical transmembrane segments spans residues 182–202 (ILGG…VVMA), 203–223 (AVMA…LMPL), and 236–256 (GVLC…TAGI).

Belongs to the ZIP transporter (TC 2.A.5) family. ZupT subfamily.

Its subcellular location is the cell inner membrane. It catalyses the reaction Zn(2+)(in) = Zn(2+)(out). Functionally, mediates zinc uptake. May also transport other divalent cations. In Escherichia fergusonii (strain ATCC 35469 / DSM 13698 / CCUG 18766 / IAM 14443 / JCM 21226 / LMG 7866 / NBRC 102419 / NCTC 12128 / CDC 0568-73), this protein is Zinc transporter ZupT.